The sequence spans 386 residues: 1-deoxy-D-xylulose 5-phosphate reductoisomerase (386 aa).

NADPH is bound by residues serine 10, glycine 11, serine 12, valine 13, asparagine 38, and asparagine 120. Residue lysine 121 coordinates 1-deoxy-D-xylulose 5-phosphate. Glutamate 122 serves as a coordination point for NADPH. Aspartate 146 serves as a coordination point for Mn(2+). Serine 147, glutamate 148, serine 172, and histidine 195 together coordinate 1-deoxy-D-xylulose 5-phosphate. Glutamate 148 provides a ligand contact to Mn(2+). NADPH is bound at residue glycine 201. The 1-deoxy-D-xylulose 5-phosphate site is built by serine 208, asparagine 213, lysine 214, and glutamate 217. Glutamate 217 serves as a coordination point for Mn(2+).

The protein belongs to the DXR family. Requires Mg(2+) as cofactor. It depends on Mn(2+) as a cofactor.

It catalyses the reaction 2-C-methyl-D-erythritol 4-phosphate + NADP(+) = 1-deoxy-D-xylulose 5-phosphate + NADPH + H(+). The protein operates within isoprenoid biosynthesis; isopentenyl diphosphate biosynthesis via DXP pathway; isopentenyl diphosphate from 1-deoxy-D-xylulose 5-phosphate: step 1/6. In terms of biological role, catalyzes the NADPH-dependent rearrangement and reduction of 1-deoxy-D-xylulose-5-phosphate (DXP) to 2-C-methyl-D-erythritol 4-phosphate (MEP). The polypeptide is 1-deoxy-D-xylulose 5-phosphate reductoisomerase (Leptospira biflexa serovar Patoc (strain Patoc 1 / Ames)).